The following is a 72-amino-acid chain: Translation initiation factor IF-1 (72 aa).

The S1-like domain maps to 1 to 72 (MAKEELLEFP…TKGRITYRFK (72 aa)).

This sequence belongs to the IF-1 family. As to quaternary structure, component of the 30S ribosomal translation pre-initiation complex which assembles on the 30S ribosome in the order IF-2 and IF-3, IF-1 and N-formylmethionyl-tRNA(fMet); mRNA recruitment can occur at any time during PIC assembly.

It is found in the cytoplasm. In terms of biological role, one of the essential components for the initiation of protein synthesis. Stabilizes the binding of IF-2 and IF-3 on the 30S subunit to which N-formylmethionyl-tRNA(fMet) subsequently binds. Helps modulate mRNA selection, yielding the 30S pre-initiation complex (PIC). Upon addition of the 50S ribosomal subunit IF-1, IF-2 and IF-3 are released leaving the mature 70S translation initiation complex. This Maricaulis maris (strain MCS10) (Caulobacter maris) protein is Translation initiation factor IF-1.